Reading from the N-terminus, the 205-residue chain is Putative 3-methyladenine DNA glycosylase (205 aa).

It belongs to the DNA glycosylase MPG family.

The sequence is that of Putative 3-methyladenine DNA glycosylase from Bacillus anthracis (strain A0248).